Consider the following 661-residue polypeptide: ATP-dependent RNA helicase vasa (661 aa).

Over residues 1 to 10 (MSDDWDDEPI) the composition is skewed to acidic residues. The segment at 1–186 (MSDDWDDEPI…RRRRNEDDIN (186 aa)) is disordered. Serine 22 carries the phosphoserine modification. At threonine 27 the chain carries Phosphothreonine. Composition is skewed to gly residues over residues 38–52 (DGVG…GYQG) and 60–83 (RIGG…GGFH). Over residues 85–95 (GRREGERDFRG) the composition is skewed to basic and acidic residues. 5 consecutive repeat copies span residues 93 to 99 (FRGGEGG), 100 to 106 (FRGGQGG), 107 to 113 (SRGGQGG), 114 to 120 (SRGGQGG), and 121 to 127 (FRGGEGG). Positions 93–127 (FRGGEGGFRGGQGGSRGGQGGSRGGQGGFRGGEGG) are 5 X 7 AA tandem repeats of [FS]-R-G-G-[EQ]-G-G. The span at 96-129 (GEGGFRGGQGGSRGGQGGSRGGQGGFRGGEGGFR) shows a compositional bias: gly residues. A compositionally biased stretch (basic and acidic residues) spans 131 to 172 (RLYENEDGDERRGRLDREERGGERRGRLDREERGGERGERGD). The B30.2/SPRY domain-binding motif signature appears at 184–188 (DINNN). The interval 184-203 (DINNNNNIVEDVERKREFYI) is required for posterior localization in oocyte. The Q motif signature appears at 245-273 (QHFTSADLRDIIIDNVNKSGYKIPTPIQK). Positions 276-453 (IPVISSGRDL…GEFLKNYVFV (178 aa)) constitute a Helicase ATP-binding domain. An ATP-binding site is contributed by 289-296 (AQTGSGKT). A DEAD box motif is present at residues 399–402 (DEAD). A Helicase C-terminal domain is found at 477–624 (KRSKLIEILS…TVPDFLRTCG (148 aa)).

Belongs to the DEAD box helicase family. DDX4/VASA subfamily. As to quaternary structure, interacts with eIF5B and faf. Interacts with gus (via B30.2/SPRY domain) and Fsn (via B30.2/SPRY domain). Interacts with aub, me31B, eIF-4a and TER94. Interacts with piwi; this interaction is RNA independent. Interacts with Dcr-1 and Fmr1; these interactions occur in the polar granules. The cofactor is Mg(2+). In terms of processing, ubiquitinated during oogenesis. Deubiquitinated by faf, which protects this protein from proteasome-mediated degradation. In terms of tissue distribution, abundantly expressed in the female germline. Gus and faf are required for vas expression in the posterior pole of the oocyte.

It is found in the cytoplasm. Its subcellular location is the perinuclear region. The protein resides in the cytoplasmic ribonucleoprotein granule. It catalyses the reaction ATP + H2O = ADP + phosphate + H(+). In terms of biological role, involved in translational control mechanisms operating in early stages of oogenesis. Required maternally in many stages of oogenesis, including cystocyte differentiation, oocyte differentiation, and specification of anterior-posterior polarity in the developing cysts. Essential for the formation and/or structural integrity of perinuclear nuage particles during germ cell formation. Required for gus, Fsn and aub accumulation at the posterior pole of the embryo. Required for the localization of vas to the perinuclear region of nurse cells. May have a role in production of piwi-interacting RNA (piRNA). The protein is ATP-dependent RNA helicase vasa of Drosophila melanogaster (Fruit fly).